The chain runs to 373 residues: Lipoyl synthase, mitochondrial (373 aa).

The N-terminal 26 residues, 1–26, are a transit peptide targeting the mitochondrion; it reads MALRCWDAARSLGSRIFGRYACSVRA. Positions 105, 110, 116, 136, 140, 143, and 351 each coordinate [4Fe-4S] cluster. The 220-residue stretch at 121-340 folds into the Radical SAM core domain; the sequence is EYATATATIM…EEVGNELGFH (220 aa).

Belongs to the radical SAM superfamily. Lipoyl synthase family. It depends on [4Fe-4S] cluster as a cofactor.

The protein resides in the mitochondrion. The enzyme catalyses [[Fe-S] cluster scaffold protein carrying a second [4Fe-4S](2+) cluster] + N(6)-octanoyl-L-lysyl-[protein] + 2 oxidized [2Fe-2S]-[ferredoxin] + 2 S-adenosyl-L-methionine + 4 H(+) = [[Fe-S] cluster scaffold protein] + N(6)-[(R)-dihydrolipoyl]-L-lysyl-[protein] + 4 Fe(3+) + 2 hydrogen sulfide + 2 5'-deoxyadenosine + 2 L-methionine + 2 reduced [2Fe-2S]-[ferredoxin]. It functions in the pathway protein modification; protein lipoylation via endogenous pathway; protein N(6)-(lipoyl)lysine from octanoyl-[acyl-carrier-protein]: step 2/2. Catalyzes the radical-mediated insertion of two sulfur atoms into the C-6 and C-8 positions of the octanoyl moiety bound to the lipoyl domains of lipoate-dependent enzymes, thereby converting the octanoylated domains into lipoylated derivatives. In Rattus norvegicus (Rat), this protein is Lipoyl synthase, mitochondrial (Lias).